Here is a 147-residue protein sequence, read N- to C-terminus: Large-conductance mechanosensitive channel (147 aa).

The next 2 membrane-spanning stretches (helical) occupy residues 14 to 34 (VVDM…VKSL) and 85 to 105 (FGLF…LFMI).

Belongs to the MscL family. As to quaternary structure, homopentamer.

The protein localises to the cell inner membrane. Channel that opens in response to stretch forces in the membrane lipid bilayer. May participate in the regulation of osmotic pressure changes within the cell. This Tolumonas auensis (strain DSM 9187 / NBRC 110442 / TA 4) protein is Large-conductance mechanosensitive channel.